A 1074-amino-acid chain; its full sequence is Fibrous sheath CABYR-binding protein (1074 aa).

The tract at residues 1 to 73 (MEECEEPEEP…SKDNYSRKEY (73 aa)) is disordered. 4 positions are modified to phosphoserine: serine 25, serine 57, serine 186, and serine 275. Disordered stretches follow at residues 272–294 (QAPS…KDVV) and 317–343 (LVQG…SELP). The span at 274 to 290 (PSPAEETSAAETATTTA) shows a compositional bias: low complexity. Phosphoserine is present on serine 365. 2 disordered regions span residues 437-789 (VSAD…PLES) and 818-982 (GVPA…PLKT). Residues 448–467 (PPSAEDASEEVASSEVLPPS) show a composition bias toward low complexity. Pro residues predominate over residues 528–544 (VLPPPAEEAPAEVPPPL). The span at 558–575 (EEGPAEVPLAPAEEVPAE) shows a compositional bias: low complexity. 2 stretches are compositionally biased toward pro residues: residues 576–592 (FLPP…PPPL) and 673–688 (PLPP…PPPA). Residues 689-720 (TEEAPVEVLPPATEEAPVEVLPPATEEAPVEV) show a composition bias toward low complexity. Serine 1020 carries the post-translational modification Phosphoserine. Positions 1026-1054 (SEKELESTTLTSDKMSEGIDSVPEDVSGT) are disordered.

In terms of assembly, interacts with CABYR. Interacts with ROPN1 and ROPN1L; the interaction increases upon spermatozoa capacitation conditions. Phosphorylated by PKA upon spermatozoa capacitation conditions. Expression is restricted to testis and epididymis, expressed by spermatozoa.

It localises to the cell projection. The protein localises to the cilium. Its subcellular location is the flagellum. Its function is as follows. May be involved in the later stages of fibrous sheath biogenesis and spermatozoa capacitation. Inhibits ROPN1 and ROPN1L SUMOylation. Binds calcium. This is Fibrous sheath CABYR-binding protein from Mus musculus (Mouse).